The primary structure comprises 109 residues: Irditoxin subunit A (109 aa).

The signal sequence occupies residues 1-19 (MKTLLLAVAVVAFVCLGSA). A propeptide spanning residues 20-34 (DQLGLGRQQIDWGQG) is cleaved from the precursor. Pyrrolidone carboxylic acid is present on glutamine 35. Disulfide bonds link cysteine 44-cysteine 66, cysteine 47-cysteine 55, cysteine 61-cysteine 85, cysteine 89-cysteine 100, and cysteine 101-cysteine 106.

The protein belongs to the three-finger toxin family. Ancestral subfamily. Boigatoxin sub-subfamily. In terms of assembly, heterodimer of A and B chains; disulfide-linked. Expressed by the venom gland.

It localises to the secreted. Its function is as follows. This bird and reptile-specific postsynaptic neurotoxin inhibits the chick muscle alpha-1-beta-1-gamma-delta (CHRNA1-CHRNB1-CHRNG-CHNRD) nicotinic acetylcholine receptor (nAChR) 100-fold more compared with the mouse receptor. In vivo, produces rapid flaccid paralysis, dyspnea and increased respiratory rate in geckos. At sublethal doses geckos were immobilized for up to three days and then recovered. Chicks injected with lethal doses showed rapid onset of inactivity, dyspnea and neck droop, and no extended paralysis with survival was seen. This is Irditoxin subunit A from Boiga irregularis (Brown tree snake).